The sequence spans 453 residues: Presenilin-like protein At1g08700 (453 aa).

The Cytoplasmic segment spans residues 1–8 (MESSILDS). A helical membrane pass occupies residues 9–29 (LGVEIIGVMAPVSICMFLVVL). Residues 30 to 68 (LTYSLSVTSDPQIRSAANLIYIENPSDSTTVKLEGSLAN) are Lumenal-facing. The chain crosses the membrane as a helical span at residues 69 to 89 (AIVFVVLIAAVTFILVLLFYY). At 90–103 (NFTNFLKHYMRFSA) the chain is on the cytoplasmic side. A helical membrane pass occupies residues 104–124 (FFVLGTMGGAIFLSIIQHFSI). The Lumenal portion of the chain corresponds to 125–132 (PVDSITCF). The helical transmembrane segment at 133–153 (ILLFNFTILGTLSVFAGGIPI) threads the bilayer. Topologically, residues 154–159 (VLRQCY) are cytoplasmic. The next 2 membrane-spanning stretches (helical) occupy residues 160–180 (MVVM…WTTW) and 181–201 (FILV…GGPL). D190 is a catalytic residue. The Cytoplasmic segment spans residues 202-369 (KLLVELASSR…VVDISNRGIK (168 aa)). Disordered stretches follow at residues 226–248 (VSSG…GGGV) and 292–329 (IGNG…DRES). A compositionally biased stretch (low complexity) spans 227-240 (SSGNQRRNRGSSLR). S296 is subject to Phosphoserine. Polar residues predominate over residues 309–320 (PSASEHSTSVGT). The helical transmembrane segment at 370–390 (LGLGDFIFYSVLVGRAAMYDL) threads the bilayer. D374 is a catalytic residue. Residues 391 to 392 (MT) lie on the Lumenal side of the membrane. A helical membrane pass occupies residues 393–413 (VYACYLAIISGLGCTLILLSV). Topologically, residues 414-417 (YNRA) are cytoplasmic. Residues 418-438 (LPALPISIMLGVVFYFLTRLL) constitute an intramembrane region (helical). The short motif at 419 to 421 (PAL) is the PAL element. Residues 439 to 453 (MEPFVVGVTTNLMMF) are Cytoplasmic-facing.

It belongs to the peptidase A22A family. In terms of assembly, homodimer. Probable component of the gamma-secretase complex, a complex composed of a presenilin homodimer, nicastrin, APH1 and PEN2.

The protein resides in the endoplasmic reticulum membrane. It is found in the golgi apparatus membrane. Its function is as follows. Probable subunit of the gamma-secretase complex, an endoprotease complex that catalyzes the intramembrane cleavage of integral membrane proteins such as Notch receptors. This Arabidopsis thaliana (Mouse-ear cress) protein is Presenilin-like protein At1g08700.